Consider the following 237-residue polypeptide: BTB/POZ domain-containing protein KCTD6 (237 aa).

The tract at residues 1–104 (MDNGDWGYMM…FYQIEPLIQC (104 aa)) is interaction with ANK1 isoform Mu17. Residues 10–110 (MTDPVTLNVG…LIQCLNDPKP (101 aa)) are interaction with CUL3. The region spanning 12 to 81 (DPVTLNVGGH…LRTSELTLPL (70 aa)) is the BTB domain. Positions 113–187 (PMDTFEEVVE…TFGPCDYHQE (75 aa)) are interaction with USP21.

In terms of assembly, homopentamer. Interacts with KCTD11; KCTD6 and KCTD11 may associate in pentameric assemblies. Interacts (via BTB domain) with CUL3; initially a 4:4 stoichiometry has been reported, however, electron microscopy revealed pentameric states with a five-pointed pinwheel shape. The interaction with CUL3 is indicative for a participation in a BCR (BTB-CUL3-RBX1) E3 ubiquitin-protein ligase complex. Interacts with HDAC1; probably indirect as the interaction is requires the presence of KCTD11. Interacts with USP21 (preferentially catalytic inactive form). Interacts with ANK1 isoform Mu17; detected in striated muscle. Interacts with USP11. In terms of tissue distribution, highly expressed in cerebellum and brain. Expression is down-regulated in medulloblastoma.

The protein localises to the cytoplasm. It is found in the myofibril. The protein resides in the sarcomere. Its subcellular location is the m line. Its pathway is protein modification; protein ubiquitination. Probable substrate-specific adapter of a BCR (BTB-CUL3-RBX1) E3 ubiquitin-protein ligase complex mediating the ubiquitination and subsequent proteasomal degradation of target proteins. Promotes the ubiquitination of HDAC1; the function seems to depend on KCTD11:KCTD6 oligomerization. Can function as antagonist of the Hedgehog pathway by affecting the nuclear transfer of transcription factor GLI1; the function probably occurs via HDAC1 down-regulation, keeping GLI1 acetylated and inactive. Inhibits cell growth and tumorigenicity of medulloblastoma (MDB). Involved in regulating protein levels of ANK1 isoform Mu17 probably implicating CUL3-dependent proteasomal degradation. This Homo sapiens (Human) protein is BTB/POZ domain-containing protein KCTD6 (KCTD6).